The chain runs to 410 residues: Sprouty-related, EVH1 domain-containing protein 3 (410 aa).

Residues 1–113 (MVRVRAVVMA…KSLLAALAAL (113 aa)) form the WH1 domain. The segment at 117-210 (SLTPSSSSSS…PEPSEPLAGA (94 aa)) is disordered. Low complexity-rich tracts occupy residues 120-130 (PSSSSSSSSPS) and 147-165 (DSSSSHSRQETPPSAAAAP). One can recognise a KBD domain in the interval 195 to 244 (LPFTGIPEPSEPLAGAGGLGWGGRGYEDYRRSGPPAPLALSTCVVRFAKT). Arginine 240 is modified (asymmetric dimethylarginine). At arginine 248 the chain carries Omega-N-methylarginine. The disordered stretch occupies residues 258-288 (LPAPLTEAAPPAPPARPPPGPGPSSAPAKAS). Pro residues predominate over residues 267–281 (PPAPPARPPPGPGPS). Residues 296–407 (RCVHCRALFR…CAGCGGRHEE (112 aa)) enclose the SPR domain.

As to quaternary structure, interacts with palmitoyltransferase ZDHHC17/HIP14; the interaction leads to palmitoylation of SPRED3. Phosphorylated on tyrosine. Post-translationally, palmitoylated by ZDHHC17/HIP14. In terms of processing, ubiquitinated.

The protein resides in the cell membrane. Tyrosine kinase substrate that inhibits growth-factor-mediated activation of MAP kinase. Inhibits fibroblast growth factor (FGF)-induced retinal lens fiber differentiation, probably by inhibiting FGF-mediated phosphorylation of ERK1/2. Inhibits TGFB-induced epithelial-to-mesenchymal transition in lens epithelial cells. The sequence is that of Sprouty-related, EVH1 domain-containing protein 3 (SPRED3) from Homo sapiens (Human).